Here is a 418-residue protein sequence, read N- to C-terminus: 3-isopropylmalate dehydratase large subunit (418 aa).

Cys-298, Cys-358, and Cys-361 together coordinate [4Fe-4S] cluster.

The protein belongs to the aconitase/IPM isomerase family. LeuC type 2 subfamily. As to quaternary structure, heterodimer of LeuC and LeuD. [4Fe-4S] cluster is required as a cofactor.

The enzyme catalyses (2R,3S)-3-isopropylmalate = (2S)-2-isopropylmalate. It functions in the pathway amino-acid biosynthesis; L-leucine biosynthesis; L-leucine from 3-methyl-2-oxobutanoate: step 2/4. In terms of biological role, catalyzes the isomerization between 2-isopropylmalate and 3-isopropylmalate, via the formation of 2-isopropylmaleate. The chain is 3-isopropylmalate dehydratase large subunit from Caldanaerobacter subterraneus subsp. tengcongensis (strain DSM 15242 / JCM 11007 / NBRC 100824 / MB4) (Thermoanaerobacter tengcongensis).